The following is an 82-amino-acid chain: Small ribosomal subunit protein uS17 (82 aa).

The protein belongs to the universal ribosomal protein uS17 family. As to quaternary structure, part of the 30S ribosomal subunit.

Its function is as follows. One of the primary rRNA binding proteins, it binds specifically to the 5'-end of 16S ribosomal RNA. This chain is Small ribosomal subunit protein uS17, found in Thermosynechococcus vestitus (strain NIES-2133 / IAM M-273 / BP-1).